Reading from the N-terminus, the 104-residue chain is MSTYAIIKTGGKQVKVEVGQAIYVEKIDAEAGAEVTFNEVVLVGGDKTVVGTPVVEGATVVGTVEKQGKQKKVVTFKYKPKKGSHRKQGHRQPYTKVVINAINA.

The protein belongs to the bacterial ribosomal protein bL21 family. Part of the 50S ribosomal subunit. Contacts protein L20.

In terms of biological role, this protein binds to 23S rRNA in the presence of protein L20. The polypeptide is Large ribosomal subunit protein bL21 (Streptococcus pyogenes serotype M1).